We begin with the raw amino-acid sequence, 143 residues long: Large ribosomal subunit protein uL13 (143 aa).

It belongs to the universal ribosomal protein uL13 family. Part of the 50S ribosomal subunit.

Its function is as follows. This protein is one of the early assembly proteins of the 50S ribosomal subunit, although it is not seen to bind rRNA by itself. It is important during the early stages of 50S assembly. This is Large ribosomal subunit protein uL13 from Solibacter usitatus (strain Ellin6076).